We begin with the raw amino-acid sequence, 67 residues long: Sec-independent protein translocase protein TatA (67 aa).

A helical transmembrane segment spans residues 1–21 (MGSFSLTHWIIVLIIVVLIFG). The tract at residues 43 to 67 (LNEGTDGKEAQKDDVIEHKKDEDKA) is disordered. Residues 47-67 (TDGKEAQKDDVIEHKKDEDKA) are compositionally biased toward basic and acidic residues.

The protein belongs to the TatA/E family. In terms of assembly, the Tat system comprises two distinct complexes: a TatABC complex, containing multiple copies of TatA, TatB and TatC subunits, and a separate TatA complex, containing only TatA subunits. Substrates initially bind to the TatABC complex, which probably triggers association of the separate TatA complex to form the active translocon.

The protein resides in the cell inner membrane. In terms of biological role, part of the twin-arginine translocation (Tat) system that transports large folded proteins containing a characteristic twin-arginine motif in their signal peptide across membranes. TatA could form the protein-conducting channel of the Tat system. The chain is Sec-independent protein translocase protein TatA from Neisseria gonorrhoeae (strain ATCC 700825 / FA 1090).